We begin with the raw amino-acid sequence, 416 residues long: Gamma-glutamyl phosphate reductase (416 aa).

This sequence belongs to the gamma-glutamyl phosphate reductase family.

It localises to the cytoplasm. It catalyses the reaction L-glutamate 5-semialdehyde + phosphate + NADP(+) = L-glutamyl 5-phosphate + NADPH + H(+). It participates in amino-acid biosynthesis; L-proline biosynthesis; L-glutamate 5-semialdehyde from L-glutamate: step 2/2. Functionally, catalyzes the NADPH-dependent reduction of L-glutamate 5-phosphate into L-glutamate 5-semialdehyde and phosphate. The product spontaneously undergoes cyclization to form 1-pyrroline-5-carboxylate. The polypeptide is Gamma-glutamyl phosphate reductase (Streptococcus mutans serotype c (strain ATCC 700610 / UA159)).